Consider the following 272-residue polypeptide: Insulin-like growth factor-binding protein 1 (272 aa).

An N-terminal signal peptide occupies residues 1–25; sequence MPEVPAAGLWPFLLLLAVQVSTVAS. An IGFBP N-terminal domain is found at 28 to 109; that stretch reads QPWHCAPCSA…TRGQGACVPE (82 aa). Cystine bridges form between Cys-32–Cys-59, Cys-35–Cys-61, Cys-43–Cys-62, Cys-50–Cys-65, and Cys-73–Cys-86. Ser-139, Ser-157, and Ser-169 each carry phosphoserine. Residue Thr-170 is modified to Phosphothreonine. A Phosphotyrosine modification is found at Tyr-171. The Thyroglobulin type-1 domain maps to 186-264; the sequence is KQPCRRELYK…SLEIRGDPNC (79 aa). Intrachain disulfides connect Cys-189–Cys-219, Cys-230–Cys-241, and Cys-243–Cys-264. Ser-255 carries the post-translational modification Phosphoserine. Positions 259–261 match the Cell attachment site motif; it reads RGD.

Binds equally well IGF1 and IGF2. Interacts with integrin ITGA5:ITGB1. Interacts with VHL; this interaction inhibits HIF1A degradation.

The protein localises to the secreted. Multifunctional protein that plays a critical role in regulating the availability of IGFs such as IGF1 and IGF2 to their receptors and thereby regulates IGF-mediated cellular processes including cell migration, proliferation, differentiation or apoptosis in a cell-type specific manner. Also plays a positive role in cell migration by interacting with integrin ITGA5:ITGB1 through its RGD motif. Mechanistically, binding to integrins leads to activation of focal adhesion kinase/PTK2 and stimulation of the mitogen-activated protein kinase (MAPK) pathway. Regulates cardiomyocyte apoptosis by suppressing HIF-1alpha/HIF1A degradation through ubiquitination. The chain is Insulin-like growth factor-binding protein 1 (IGFBP1) from Ictidomys tridecemlineatus (Thirteen-lined ground squirrel).